Consider the following 428-residue polypeptide: Acetyltransferase sirH (428 aa).

An N-linked (GlcNAc...) asparagine glycan is attached at N8. 6 consecutive transmembrane segments (helical) span residues L33–L53, V55–S75, A78–V98, L305–S325, G329–L349, and F366–F386.

This sequence belongs to the wax synthase family.

The protein localises to the membrane. Its pathway is polyketide biosynthesis. Functionally, acetyltransferase; part of the gene cluster that mediates the biosynthesis of asperlin, a polyketide showing anti-inflammatory, antitumor and antibiotic activities. The first step of the asperlin biosynthesis is the production of the intermediate 2,4,6-octatrienoic acid by the highly redusing polyketide synthase alnA with cleavage of the PKS product by the esterase alnB. 2,4,6-octatrienoic acid is further converted to asperlin via several steps involving the remaining enzymes from the cluster. This chain is Acetyltransferase sirH, found in Emericella nidulans (strain FGSC A4 / ATCC 38163 / CBS 112.46 / NRRL 194 / M139) (Aspergillus nidulans).